A 216-amino-acid chain; its full sequence is Transmembrane emp24 domain-containing protein eca (216 aa).

Positions 1–20 (MRDQFISLALILCVLHSACG) are cleaved as a signal peptide. The Lumenal portion of the chain corresponds to 21–182 (LYFHISETER…FRHTSESTNS (162 aa)). The region spanning 30-126 (RKCFIEEVPD…QLRVHLDIQV (97 aa)) is the GOLD domain. Positions 134–164 (ANVAQKEKLTELQLRIRQLLDQVEQITKEQN) form a coiled coil. Residues 183–203 (RVLWWSLAQTVVLVCMGFWQM) traverse the membrane as a helical segment. Residues 204–216 (RHLKSFFEAKKLV) lie on the Cytoplasmic side of the membrane. The Prevents secretion from ER motif lies at 213-216 (KKLV).

Belongs to the EMP24/GP25L family.

The protein resides in the endoplasmic reticulum membrane. Its function is as follows. Eca and bai are essential, though not redundant, for dorsoventral patterning of the embryo. Specifically required during early embryogenesis for the activity of maternal tkv, while the zygotic tkv is not affected. Involved in Golgi organization. The protein is Transmembrane emp24 domain-containing protein eca of Drosophila simulans (Fruit fly).